The following is a 339-amino-acid chain: 7,8-didemethyl-8-hydroxy-5-deazariboflavin synthase (339 aa).

One can recognise a Radical SAM core domain in the interval 25–256 (ATYSPAYTIV…PDITIQIPPN (232 aa)). Cysteine 39, cysteine 43, and cysteine 46 together coordinate [4Fe-4S] cluster.

It belongs to the radical SAM superfamily. CofG family. Consists of two subunits, CofG and CofH. The cofactor is [4Fe-4S] cluster.

It catalyses the reaction 5-amino-5-(4-hydroxybenzyl)-6-(D-ribitylimino)-5,6-dihydrouracil + S-adenosyl-L-methionine = 7,8-didemethyl-8-hydroxy-5-deazariboflavin + 5'-deoxyadenosine + L-methionine + NH4(+) + H(+). The protein operates within cofactor biosynthesis; coenzyme F0 biosynthesis. In terms of biological role, catalyzes the radical-mediated synthesis of 7,8-didemethyl-8-hydroxy-5-deazariboflavin from 5-amino-5-(4-hydroxybenzyl)-6-(D-ribitylimino)-5,6-dihydrouracil. The sequence is that of 7,8-didemethyl-8-hydroxy-5-deazariboflavin synthase from Nostoc sp. (strain PCC 7120 / SAG 25.82 / UTEX 2576).